The primary structure comprises 261 residues: Glutathione S-transferase theta-1 (261 aa).

The 100-residue stretch at 2 to 101 folds into the GST N-terminal domain; the sequence is GLELYLDLLS…YLSRKYNTPD (100 aa). Glutathione is bound by residues 72–73 and 85–86; these read KV and EC. Residues 107 to 248 enclose the GST C-terminal domain; the sequence is DIKKRAQVDE…LSNIQIDPQL (142 aa).

This sequence belongs to the GST superfamily. Theta family. In terms of assembly, homodimer.

It is found in the cytoplasm. It catalyses the reaction RX + glutathione = an S-substituted glutathione + a halide anion + H(+). In terms of biological role, conjugation of reduced glutathione to a wide number of exogenous and endogenous hydrophobic electrophiles. The chain is Glutathione S-transferase theta-1 (GSTT1) from Gallus gallus (Chicken).